Here is a 306-residue protein sequence, read N- to C-terminus: D-alanine--D-alanine ligase (306 aa).

An ATP-grasp domain is found at 107 to 303 (KHLFKSAGLS…FEQLVVRILE (197 aa)). 134 to 189 (IMQQFKKVMVKPSHEGSSIGMAQASTPQELEDALSNAFKFDSQVLVEQWISGREFT) contributes to the ATP binding site. Asp257, Glu270, and Asn272 together coordinate Mg(2+).

The protein belongs to the D-alanine--D-alanine ligase family. It depends on Mg(2+) as a cofactor. Requires Mn(2+) as cofactor.

Its subcellular location is the cytoplasm. The enzyme catalyses 2 D-alanine + ATP = D-alanyl-D-alanine + ADP + phosphate + H(+). It functions in the pathway cell wall biogenesis; peptidoglycan biosynthesis. In terms of biological role, cell wall formation. This chain is D-alanine--D-alanine ligase, found in Pseudoalteromonas translucida (strain TAC 125).